Consider the following 497-residue polypeptide: Cysteine desulfurase, mitochondrial (497 aa).

The N-terminal 33 residues, 1-33 (MLKSTATRSITRLSQVYNVPAATYRACLVSRRF), are a transit peptide targeting the mitochondrion. Pyridoxal 5'-phosphate is bound by residues 168–169 (AT), Asn-248, Gln-276, and 296–298 (SSH). Residue Lys-299 is modified to N6-(pyridoxal phosphate)lysine. Residue Thr-336 participates in pyridoxal 5'-phosphate binding. Cys-421 acts as the Cysteine persulfide intermediate in catalysis. Cys-421 provides a ligand contact to [2Fe-2S] cluster.

It belongs to the class-V pyridoxal-phosphate-dependent aminotransferase family. NifS/IscS subfamily. Pyridoxal 5'-phosphate serves as cofactor.

It is found in the mitochondrion. It catalyses the reaction (sulfur carrier)-H + L-cysteine = (sulfur carrier)-SH + L-alanine. In terms of biological role, catalyzes the removal of elemental sulfur from cysteine to produce alanine. It supplies the inorganic sulfur for iron-sulfur (Fe-S) clusters. Plays a role in both tRNA-processing and mitochondrial metabolism. Involved in the 2-thio-modification of both 5-carboxymethylaminomethyl-2-thiouridine in mitochondrial tRNAs and 5-methoxycarbonylmethyl-2-thiouridine (mcm5s2U) in cytoplasmic tRNAs. The polypeptide is Cysteine desulfurase, mitochondrial (Saccharomyces cerevisiae (strain ATCC 204508 / S288c) (Baker's yeast)).